Consider the following 203-residue polypeptide: Ras-related protein Rab-18 (203 aa).

Ser20, Gly23, Lys24, Ser25, Ser26, Asp37, Pro38, Thr43, Gly69, Lys126, Asp128, and Ala155 together coordinate GTP. An Effector region motif is present at residues 40-48 (QAATIGVDF). 2 S-geranylgeranyl cysteine lipidation sites follow: Cys201 and Cys203. A Cysteine methyl ester modification is found at Cys203.

It belongs to the small GTPase superfamily. Rab family.

It carries out the reaction GTP + H2O = GDP + phosphate + H(+). Functionally, the small GTPases Rab are key regulators of intracellular membrane trafficking, from the formation of transport vesicles to their fusion with membranes. Rabs cycle between an inactive GDP-bound form and an active GTP-bound form that is able to recruit to membranes different sets of downstream effectors directly responsible for vesicle formation, movement, tethering and fusion. Plays a role in apical endocytosis/recycling. May be implicated in transport between the plasma membrane and early endosomes. Plays a role in the shedding of pathogen spores from intestinal cells. This Caenorhabditis elegans protein is Ras-related protein Rab-18 (rab-18).